The chain runs to 408 residues: Adenylosuccinate synthetase (408 aa).

GTP is bound by residues 12 to 18 and 40 to 42; these read GDEGKGK and GHT. Residue aspartate 13 is the Proton acceptor of the active site. Positions 13 and 40 each coordinate Mg(2+). IMP contacts are provided by residues 13–16, 38–41, threonine 121, arginine 135, glutamine 213, threonine 228, and arginine 292; these read DEGK and NAGH. The active-site Proton donor is histidine 41. Residue 288–294 coordinates substrate; the sequence is TTTGRPR. GTP is bound by residues arginine 294, 320-322, and 393-395; these read KLD and STS.

It belongs to the adenylosuccinate synthetase family. In terms of assembly, homodimer. Mg(2+) serves as cofactor.

Its subcellular location is the cytoplasm. It carries out the reaction IMP + L-aspartate + GTP = N(6)-(1,2-dicarboxyethyl)-AMP + GDP + phosphate + 2 H(+). It participates in purine metabolism; AMP biosynthesis via de novo pathway; AMP from IMP: step 1/2. Its function is as follows. Plays an important role in the de novo pathway of purine nucleotide biosynthesis. Catalyzes the first committed step in the biosynthesis of AMP from IMP. The sequence is that of Adenylosuccinate synthetase from Thermus thermophilus (strain ATCC BAA-163 / DSM 7039 / HB27).